A 371-amino-acid polypeptide reads, in one-letter code: S-adenosylmethionine:tRNA ribosyltransferase-isomerase (371 aa).

It belongs to the QueA family. Monomer.

The protein localises to the cytoplasm. It catalyses the reaction 7-aminomethyl-7-carbaguanosine(34) in tRNA + S-adenosyl-L-methionine = epoxyqueuosine(34) in tRNA + adenine + L-methionine + 2 H(+). It participates in tRNA modification; tRNA-queuosine biosynthesis. Functionally, transfers and isomerizes the ribose moiety from AdoMet to the 7-aminomethyl group of 7-deazaguanine (preQ1-tRNA) to give epoxyqueuosine (oQ-tRNA). In Prochlorococcus marinus (strain MIT 9313), this protein is S-adenosylmethionine:tRNA ribosyltransferase-isomerase.